The chain runs to 143 residues: Nucleoside diphosphate kinase 2 (143 aa).

ATP-binding residues include lysine 11, phenylalanine 59, arginine 87, threonine 93, arginine 104, and asparagine 114. The active-site Pros-phosphohistidine intermediate is the histidine 117.

It belongs to the NDK family. As to quaternary structure, homotetramer. Mg(2+) serves as cofactor.

It localises to the cytoplasm. It carries out the reaction a 2'-deoxyribonucleoside 5'-diphosphate + ATP = a 2'-deoxyribonucleoside 5'-triphosphate + ADP. The enzyme catalyses a ribonucleoside 5'-diphosphate + ATP = a ribonucleoside 5'-triphosphate + ADP. Functionally, major role in the synthesis of nucleoside triphosphates other than ATP. The ATP gamma phosphate is transferred to the NDP beta phosphate via a ping-pong mechanism, using a phosphorylated active-site intermediate. This is Nucleoside diphosphate kinase 2 from Protochlamydia amoebophila (strain UWE25).